Here is a 398-residue protein sequence, read N- to C-terminus: RNA-binding protein rnc1 (398 aa).

Residues 40–78 (KVSIPTPKPSTPLSTLTNGSTIQQSMTNQPEPTSQVPPI) are disordered. At threonine 50 the chain carries Phosphothreonine. Polar residues predominate over residues 57 to 76 (NGSTIQQSMTNQPEPTSQVP). KH domains are found at residues 93–157 (QLTL…YRFI) and 178–243 (PRKL…IWEI). Positions 274 to 290 (ASTASPQQVSPPAAPST) are enriched in low complexity. Positions 274 to 295 (ASTASPQQVSPPAAPSTTSGEA) are disordered. Residues 320 to 385 (KVTQNISIPA…EENEKALFLL (66 aa)) form the KH 3 domain.

In terms of processing, phosphorylated by pmk1. Phosphorylation causes enhancement of the RNA-binding activity.

The protein resides in the cytoplasm. In terms of biological role, binds and stabilizes pmp1 mRNA and hence acts as a negative regulator of pmk1 signaling. Overexpression suppresses the Cl(-) sensitivity of calcineurin deletion. The chain is RNA-binding protein rnc1 from Schizosaccharomyces pombe (strain 972 / ATCC 24843) (Fission yeast).